A 104-amino-acid polypeptide reads, in one-letter code: Large ribosomal subunit protein uL24 (104 aa).

It belongs to the universal ribosomal protein uL24 family. As to quaternary structure, part of the 50S ribosomal subunit.

One of two assembly initiator proteins, it binds directly to the 5'-end of the 23S rRNA, where it nucleates assembly of the 50S subunit. Its function is as follows. One of the proteins that surrounds the polypeptide exit tunnel on the outside of the subunit. This chain is Large ribosomal subunit protein uL24, found in Hydrogenovibrio crunogenus (strain DSM 25203 / XCL-2) (Thiomicrospira crunogena).